We begin with the raw amino-acid sequence, 194 residues long: Peroxiredoxin 2 (194 aa).

The Thioredoxin domain maps to 2–160 (PQLQKPAPAF…TLRLVQAFQY (159 aa)). Cys47 functions as the Cysteine sulfenic acid (-SOH) intermediate in the catalytic mechanism. At Thr193 the chain carries Phosphothreonine. Ser194 is modified (phosphoserine).

The protein belongs to the peroxiredoxin family. AhpC/Prx1 subfamily. Homodimer; disulfide-linked, upon oxidation. 5 homodimers assemble to form a ring-like decamer. Also exists as a monomer. In terms of processing, the enzyme can be inactivated by further oxidation of the cysteine sulfenic acid (C(P)-SOH) to sulphinic acid (C(P)-SO2H) instead of its condensation to a disulfide bond. It can be reactivated by forming a transient disulfide bond with sulfiredoxin SRXN1, which reduces the cysteine sulfinic acid in an ATP- and Mg-dependent manner. Post-translationally, conjugated to URM1, a ubiquitin-like protein. As to expression, detected in the head and body (at protein level).

The protein localises to the cytoplasm. The catalysed reaction is a hydroperoxide + [thioredoxin]-dithiol = an alcohol + [thioredoxin]-disulfide + H2O. Its function is as follows. Thiol-specific peroxidase that catalyzes the reduction of hydrogen peroxide and organic hydroperoxides to water and alcohols, respectively. Plays a role in cell protection against oxidative stress by detoxifying peroxides and as sensor of hydrogen peroxide-mediated signaling events. Might participate in the signaling cascades of growth factors and tumor necrosis factor-alpha by regulating the intracellular concentrations of H(2)O(2). Reduces an intramolecular disulfide bond in GDPD5 that gates the ability to GDPD5 to drive postmitotic motor neuron differentiation. In Drosophila melanogaster (Fruit fly), this protein is Peroxiredoxin 2.